Reading from the N-terminus, the 162-residue chain is Cytochrome B pre-mRNA-processing protein 6 (162 aa).

An N-acetylserine modification is found at Ser-2. Phosphothreonine is present on Thr-97.

It is found in the mitochondrion. This protein is involved in processing of the 5' terminus and the intervening sequences of cytochrome b pre-mRNA. This is Cytochrome B pre-mRNA-processing protein 6 (CBP6) from Saccharomyces cerevisiae (strain ATCC 204508 / S288c) (Baker's yeast).